The chain runs to 38 residues: Photosystem II reaction center protein L (38 aa).

The helical transmembrane segment at 17-37 (SLYWGLLLIFVLAVLFSSYIF) threads the bilayer.

This sequence belongs to the PsbL family. PSII is composed of 1 copy each of membrane proteins PsbA, PsbB, PsbC, PsbD, PsbE, PsbF, PsbH, PsbI, PsbJ, PsbK, PsbL, PsbM, PsbT, PsbX, PsbY, PsbZ, Psb30/Ycf12, at least 3 peripheral proteins of the oxygen-evolving complex and a large number of cofactors. It forms dimeric complexes.

The protein localises to the plastid. The protein resides in the chloroplast thylakoid membrane. In terms of biological role, one of the components of the core complex of photosystem II (PSII). PSII is a light-driven water:plastoquinone oxidoreductase that uses light energy to abstract electrons from H(2)O, generating O(2) and a proton gradient subsequently used for ATP formation. It consists of a core antenna complex that captures photons, and an electron transfer chain that converts photonic excitation into a charge separation. This subunit is found at the monomer-monomer interface and is required for correct PSII assembly and/or dimerization. The polypeptide is Photosystem II reaction center protein L (Oltmannsiellopsis viridis (Marine flagellate)).